The chain runs to 521 residues: Cholesterol side-chain cleavage enzyme, mitochondrial (521 aa).

Residues 1 to 39 (MLAKGLPPRSVLVKGCQTFLSAPKERLGHLRVPTSEGAG) constitute a mitochondrion transit peptide. Cys462 contacts heme.

Belongs to the cytochrome P450 family. As to quaternary structure, interacts with FDX1/adrenodoxin. The cofactor is heme.

It is found in the mitochondrion inner membrane. It carries out the reaction 6 reduced [adrenodoxin] + cholesterol + 3 O2 + 6 H(+) = 4-methylpentanal + pregnenolone + 6 oxidized [adrenodoxin] + 4 H2O. The enzyme catalyses 2 reduced [adrenodoxin] + cholesterol + O2 + 2 H(+) = (22R)-hydroxycholesterol + 2 oxidized [adrenodoxin] + H2O. The catalysed reaction is (22R)-hydroxycholesterol + 2 reduced [adrenodoxin] + O2 + 2 H(+) = (20R,22R)-20,22-dihydroxycholesterol + 2 oxidized [adrenodoxin] + H2O. It catalyses the reaction (20R,22R)-20,22-dihydroxycholesterol + 2 reduced [adrenodoxin] + O2 + 2 H(+) = 4-methylpentanal + pregnenolone + 2 oxidized [adrenodoxin] + 2 H2O. The protein operates within lipid metabolism; C21-steroid hormone metabolism. Its pathway is steroid metabolism; cholesterol metabolism. Functionally, a cytochrome P450 monooxygenase that catalyzes the side-chain hydroxylation and cleavage of cholesterol to pregnenolone, the precursor of most steroid hormones. Catalyzes three sequential oxidation reactions of cholesterol, namely the hydroxylation at C22 followed with the hydroxylation at C20 to yield 20R,22R-hydroxycholesterol that is further cleaved between C20 and C22 to yield the C21-steroid pregnenolone and 4-methylpentanal. Mechanistically, uses molecular oxygen inserting one oxygen atom into a substrate and reducing the second into a water molecule. Two electrons are provided by NADPH via a two-protein mitochondrial transfer system comprising flavoprotein FDXR (adrenodoxin/ferredoxin reductase) and nonheme iron-sulfur protein FDX1 or FDX2 (adrenodoxin/ferredoxin). This Macaca fascicularis (Crab-eating macaque) protein is Cholesterol side-chain cleavage enzyme, mitochondrial (CYP11A1).